A 185-amino-acid chain; its full sequence is Ribosome-recycling factor (185 aa).

Belongs to the RRF family.

The protein resides in the cytoplasm. In terms of biological role, responsible for the release of ribosomes from messenger RNA at the termination of protein biosynthesis. May increase the efficiency of translation by recycling ribosomes from one round of translation to another. This is Ribosome-recycling factor from Streptococcus sanguinis (strain SK36).